The primary structure comprises 443 residues: Ribosomal protein uS12 methylthiotransferase RimO (443 aa).

The region spanning 10 to 120 is the MTTase N-terminal domain; sequence PRVGFVSLGC…VMQAVHRHLP (111 aa). [4Fe-4S] cluster-binding residues include Cys-19, Cys-55, Cys-84, Cys-151, Cys-155, and Cys-158. The Radical SAM core domain occupies 137–375; the sequence is LTPQHYAYLK…DFQEDISTQR (239 aa). The 67-residue stretch at 377–443 folds into the TRAM domain; it reads EAKIGREMTV…IHDLYAERVV (67 aa).

The protein belongs to the methylthiotransferase family. RimO subfamily. Requires [4Fe-4S] cluster as cofactor.

The protein localises to the cytoplasm. The catalysed reaction is L-aspartate(89)-[ribosomal protein uS12]-hydrogen + (sulfur carrier)-SH + AH2 + 2 S-adenosyl-L-methionine = 3-methylsulfanyl-L-aspartate(89)-[ribosomal protein uS12]-hydrogen + (sulfur carrier)-H + 5'-deoxyadenosine + L-methionine + A + S-adenosyl-L-homocysteine + 2 H(+). Its function is as follows. Catalyzes the methylthiolation of an aspartic acid residue of ribosomal protein uS12. The chain is Ribosomal protein uS12 methylthiotransferase RimO from Azoarcus sp. (strain BH72).